The following is a 124-amino-acid chain: Prefoldin subunit beta (124 aa).

This sequence belongs to the prefoldin subunit beta family. In terms of assembly, heterohexamer of two alpha and four beta subunits.

The protein resides in the cytoplasm. In terms of biological role, molecular chaperone capable of stabilizing a range of proteins. Seems to fulfill an ATP-independent, HSP70-like function in archaeal de novo protein folding. The sequence is that of Prefoldin subunit beta (pfdB) from Thermoplasma acidophilum (strain ATCC 25905 / DSM 1728 / JCM 9062 / NBRC 15155 / AMRC-C165).